An 84-amino-acid polypeptide reads, in one-letter code: Large ribosomal subunit protein bL27 (84 aa).

The tract at residues 1-21 (MAHKKGVGSSRNGRDSDGQRL) is disordered.

Belongs to the bacterial ribosomal protein bL27 family.

The polypeptide is Large ribosomal subunit protein bL27 (Trichlorobacter lovleyi (strain ATCC BAA-1151 / DSM 17278 / SZ) (Geobacter lovleyi)).